The following is a 309-amino-acid chain: Homoserine O-acetyltransferase (309 aa).

Cysteine 148 serves as the catalytic Acyl-thioester intermediate. Residues lysine 169 and serine 198 each coordinate substrate. Catalysis depends on histidine 241, which acts as the Proton acceptor. Glutamate 243 is an active-site residue. Substrate is bound at residue arginine 255.

The protein belongs to the MetA family.

It is found in the cytoplasm. It catalyses the reaction L-homoserine + acetyl-CoA = O-acetyl-L-homoserine + CoA. Its pathway is amino-acid biosynthesis; L-methionine biosynthesis via de novo pathway; O-acetyl-L-homoserine from L-homoserine: step 1/1. In terms of biological role, transfers an acetyl group from acetyl-CoA to L-homoserine, forming acetyl-L-homoserine. In vitro, can also use propionyl-CoA as acyl donor. In Shouchella clausii (Alkalihalobacillus clausii), this protein is Homoserine O-acetyltransferase.